Reading from the N-terminus, the 212-residue chain is Leucyl/phenylalanyl-tRNA--protein transferase (212 aa).

Belongs to the L/F-transferase family.

It is found in the cytoplasm. It catalyses the reaction N-terminal L-lysyl-[protein] + L-leucyl-tRNA(Leu) = N-terminal L-leucyl-L-lysyl-[protein] + tRNA(Leu) + H(+). The catalysed reaction is N-terminal L-arginyl-[protein] + L-leucyl-tRNA(Leu) = N-terminal L-leucyl-L-arginyl-[protein] + tRNA(Leu) + H(+). The enzyme catalyses L-phenylalanyl-tRNA(Phe) + an N-terminal L-alpha-aminoacyl-[protein] = an N-terminal L-phenylalanyl-L-alpha-aminoacyl-[protein] + tRNA(Phe). Functions in the N-end rule pathway of protein degradation where it conjugates Leu, Phe and, less efficiently, Met from aminoacyl-tRNAs to the N-termini of proteins containing an N-terminal arginine or lysine. The polypeptide is Leucyl/phenylalanyl-tRNA--protein transferase (Allorhizobium ampelinum (strain ATCC BAA-846 / DSM 112012 / S4) (Agrobacterium vitis (strain S4))).